Consider the following 598-residue polypeptide: Probable pectinesterase/pectinesterase inhibitor 34 (598 aa).

Residues 1–40 (MGYERLGPSGATGSVTTSTTTAPILNQVSTSEQPENNNRR) form a disordered region. Positions 7–23 (GPSGATGSVTTSTTTAP) are enriched in low complexity. Residues 24–36 (ILNQVSTSEQPEN) show a composition bias toward polar residues. The chain crosses the membrane as a helical span at residues 46 to 66 (VVSSIVLAISLILAAAIFAGV). The tract at residues 81–232 (RKPSQAISKA…SELVSNCLAI (152 aa)) is pectinesterase inhibitor 34. The pectinesterase 34 stretch occupies residues 284-582 (DIIVSKDGNG…FTVAEFIYGS (299 aa)). Threonine 360 and glutamine 390 together coordinate substrate. The active-site Proton donor; for pectinesterase activity is the aspartate 413. A disulfide bridge connects residues cysteine 427 and cysteine 447. Aspartate 434 functions as the Nucleophile; for pectinesterase activity in the catalytic mechanism. Positions 502 and 504 each coordinate substrate.

This sequence in the N-terminal section; belongs to the PMEI family. The protein in the C-terminal section; belongs to the pectinesterase family. Expressed in siliques.

It localises to the membrane. It catalyses the reaction [(1-&gt;4)-alpha-D-galacturonosyl methyl ester](n) + n H2O = [(1-&gt;4)-alpha-D-galacturonosyl](n) + n methanol + n H(+). It functions in the pathway glycan metabolism; pectin degradation; 2-dehydro-3-deoxy-D-gluconate from pectin: step 1/5. Its function is as follows. Acts in the modification of cell walls via demethylesterification of cell wall pectin. The polypeptide is Probable pectinesterase/pectinesterase inhibitor 34 (PME34) (Arabidopsis thaliana (Mouse-ear cress)).